Consider the following 395-residue polypeptide: Glutamate N-acetyltransferase (395 aa).

Residues Thr146, Lys169, Thr180, Glu263, Asn390, and Thr395 each contribute to the substrate site. Thr180 (nucleophile) is an active-site residue.

This sequence belongs to the ArgJ family. Heterotetramer of two alpha and two beta chains.

Its subcellular location is the cytoplasm. The catalysed reaction is N(2)-acetyl-L-ornithine + L-glutamate = N-acetyl-L-glutamate + L-ornithine. Its pathway is amino-acid biosynthesis; L-arginine biosynthesis; L-ornithine and N-acetyl-L-glutamate from L-glutamate and N(2)-acetyl-L-ornithine (cyclic): step 1/1. Its function is as follows. Catalyzes the transfer of the acetyl group from N(2)-acetylornithine to glutamate, forming N-acetylglutamate and L-ornithine. The polypeptide is Glutamate N-acetyltransferase (Methanosarcina acetivorans (strain ATCC 35395 / DSM 2834 / JCM 12185 / C2A)).